The chain runs to 910 residues: Protein translocase subunit SecA (910 aa).

Residues Gln89, 107–111, and Asp502 each bind ATP; that span reads GEGKT. Zn(2+) is bound by residues Cys894, Cys896, Cys905, and His906.

The protein belongs to the SecA family. In terms of assembly, monomer and homodimer. Part of the essential Sec protein translocation apparatus which comprises SecA, SecYEG and auxiliary proteins SecDF-YajC and YidC. The cofactor is Zn(2+).

The protein localises to the cell inner membrane. It is found in the cytoplasm. It carries out the reaction ATP + H2O + cellular proteinSide 1 = ADP + phosphate + cellular proteinSide 2.. Functionally, part of the Sec protein translocase complex. Interacts with the SecYEG preprotein conducting channel. Has a central role in coupling the hydrolysis of ATP to the transfer of proteins into and across the cell membrane, serving both as a receptor for the preprotein-SecB complex and as an ATP-driven molecular motor driving the stepwise translocation of polypeptide chains across the membrane. The chain is Protein translocase subunit SecA from Mesorhizobium japonicum (strain LMG 29417 / CECT 9101 / MAFF 303099) (Mesorhizobium loti (strain MAFF 303099)).